The chain runs to 492 residues: Putative BTB/POZ domain and WD-repeat protein R786 (492 aa).

Residues 16-86 form the BTB domain; sequence TDVEIVLIDE…FYGQIVDSTN (71 aa). WD repeat units follow at residues 241-281 and 286-325; these read QSSC…IKIK and LINR…SKGI.

Belongs to the mimivirus BTB/WD family.

The protein is Putative BTB/POZ domain and WD-repeat protein R786 of Acanthamoeba polyphaga (Amoeba).